Consider the following 590-residue polypeptide: G protein-coupled receptor kinase 5 (590 aa).

The tract at residues 1 to 185 (MELENIVANT…LERQPVTKNT (185 aa)) is N-terminal. The interval 20 to 39 (GGKRKGKSKKWKEILKFPHI) is interaction with calmodulin. The RGS domain occupies 53–171 (YCSLCDKQPI…LDSMFFDRFL (119 aa)). Residues 186-448 (FRQYRVLGKG…AAEVKRHPFF (263 aa)) form the Protein kinase domain. Residues 192–200 (LGKGGFGEV) and Lys-215 contribute to the ATP site. Asp-311 functions as the Proton acceptor in the catalytic mechanism. The short motif at 388-395 (RKEKVKRE) is the Nuclear localization signal element. The 66-residue stretch at 449-514 (RNMNFKRLEA…GSVSIPWQNE (66 aa)) folds into the AGC-kinase C-terminal domain. The residue at position 484 (Ser-484) is a Phosphoserine; by autocatalysis. A Phosphothreonine; by autocatalysis modification is found at Thr-485. Residues 531-590 (GTLPPDLNRNHPPEPPKKGLLQRLFKRQHQNNSKSSPSSKTSFNHHINSNHVSSNSTGSS) form a disordered region. Residues 538-547 (NRNHPPEPPK) show a composition bias toward basic and acidic residues. The interval 546–565 (PKKGLLQRLFKRQHQNNSKS) is sufficient for membrane localization. Residues 563–590 (SKSSPSSKTSFNHHINSNHVSSNSTGSS) show a composition bias toward low complexity. Ser-579 bears the Phosphoserine mark.

It belongs to the protein kinase superfamily. AGC Ser/Thr protein kinase family. GPRK subfamily. In terms of assembly, interacts with ST13 (via the C-terminus 303-319 AA). Interacts with TP53/p53. Interacts with HTR4 (via C-terminus 330-346 AA); this interaction is promoted by 5-HT (serotonin). Interacts with HDAC5. Interacts with GIT1. Autophosphorylated. Autophosphorylation may play a critical role in the regulation of GRK5 kinase activity. Highest levels in heart, placenta, lung &gt; skeletal muscle &gt; brain, liver, pancreas &gt; kidney.

It is found in the cytoplasm. Its subcellular location is the nucleus. The protein localises to the cell membrane. It catalyses the reaction [G-protein-coupled receptor] + ATP = [G-protein-coupled receptor]-phosphate + ADP + H(+). With respect to regulation, inhibited by calmodulin with an IC(50) of 50 nM. Calmodulin inhibits GRK5 association with receptor and phospholipid. Functionally, serine/threonine kinase that phosphorylates preferentially the activated forms of a variety of G-protein-coupled receptors (GPCRs). Such receptor phosphorylation initiates beta-arrestin-mediated receptor desensitization, internalization, and signaling events leading to their down-regulation. Phosphorylates a variety of GPCRs, including adrenergic receptors, muscarinic acetylcholine receptors (more specifically Gi-coupled M2/M4 subtypes), dopamine receptors and opioid receptors. In addition to GPCRs, also phosphorylates various substrates: Hsc70-interacting protein/ST13, TP53/p53, HDAC5, and arrestin-1/ARRB1. Phosphorylation of ARRB1 by GRK5 inhibits G-protein independent MAPK1/MAPK3 signaling downstream of 5HT4-receptors. Phosphorylation of HDAC5, a repressor of myocyte enhancer factor 2 (MEF2) leading to nuclear export of HDAC5 and allowing MEF2-mediated transcription. Phosphorylation of TP53/p53, a crucial tumor suppressor, inhibits TP53/p53-mediated apoptosis. Phosphorylation of ST13 regulates internalization of the chemokine receptor. Phosphorylates rhodopsin (RHO) (in vitro) and a non G-protein-coupled receptor, LRP6 during Wnt signaling (in vitro). The protein is G protein-coupled receptor kinase 5 (GRK5) of Homo sapiens (Human).